A 351-amino-acid polypeptide reads, in one-letter code: DNA polymerase IV (351 aa).

The 182-residue stretch at 4–185 (IIHVDMDCFF…LPLEKIPGVG (182 aa)) folds into the UmuC domain. The Mg(2+) site is built by Asp8 and Asp103. Glu104 is a catalytic residue.

The protein belongs to the DNA polymerase type-Y family. As to quaternary structure, monomer. Mg(2+) serves as cofactor.

It is found in the cytoplasm. It catalyses the reaction DNA(n) + a 2'-deoxyribonucleoside 5'-triphosphate = DNA(n+1) + diphosphate. Poorly processive, error-prone DNA polymerase involved in untargeted mutagenesis. Copies undamaged DNA at stalled replication forks, which arise in vivo from mismatched or misaligned primer ends. These misaligned primers can be extended by PolIV. Exhibits no 3'-5' exonuclease (proofreading) activity. May be involved in translesional synthesis, in conjunction with the beta clamp from PolIII. This Shigella flexneri protein is DNA polymerase IV.